We begin with the raw amino-acid sequence, 298 residues long: ADP/ATP translocase 3 (298 aa).

An N-acetylmethionine modification is found at Met-1. Topologically, residues 1–7 are mitochondrial intermembrane; the sequence is MTEQAIS. Thr-2 carries the N-acetylthreonine; in ADP/ATP translocase 3, N-terminally processed modification. A Solcar 1 repeat occupies 6 to 98; it reads ISFAKDFLAG…FAFKDKYKQI (93 aa). Residues 8 to 37 form a helical membrane-spanning segment; that stretch reads FAKDFLAGGIAAAISKTAVAPIERVKLLLQ. Residues 38–74 are Mitochondrial matrix-facing; sequence VQHASKQIAADKQYKGIVDCIVRIPKEQGVLSFWRGN. An N6,N6,N6-trimethyllysine modification is found at Lys-52. Residues 75 to 99 form a helical membrane-spanning segment; that stretch reads LANVIRYFPTQALNFAFKDKYKQIF. Residues Arg-80 and Lys-92 each coordinate ADP. Topologically, residues 100-109 are mitochondrial intermembrane; sequence LGGVDKRTQF. Lys-105 carries the N6-acetyllysine modification. Residues 110–130 form a helical membrane-spanning segment; sequence WRYFAGNLASGGAAGATSLCF. Solcar repeat units follow at residues 111-201 and 212-297; these read RYFA…AKGM and VSWM…LKKV. Over 131 to 178 the chain is Mitochondrial matrix; the sequence is VYPLDFARTRLAADVGKSGSEREFRGLGDCLVKITKSDGIRGLYQGFN. Residues 179–199 traverse the membrane as a helical segment; sequence VSVQGIIIYRAAYFGIYDTAK. The Mitochondrial intermembrane segment spans residues 200-210; it reads GMLPDPKNTHI. The helical transmembrane segment at 211–231 threads the bilayer; sequence VVSWMIAQTVTAVAGVVSYPF. Topologically, residues 232–273 are mitochondrial matrix; sequence DTVRRRMMMQSGRKGADIMYKGTVDCWRKILKDEGGKAFFKG. Arg-235 lines the ADP pocket. Positions 235–240 are important for transport activity; the sequence is RRRMMM. A Nucleotide carrier signature motif motif is present at residues 235-240; the sequence is RRRMMM. Lys-268 carries the post-translational modification N6-acetyllysine. The helical transmembrane segment at 274 to 291 threads the bilayer; that stretch reads AWSNVLRGMGGAFVLVLY. Over 292–298 the chain is Mitochondrial intermembrane; it reads DELKKVI.

The protein belongs to the mitochondrial carrier (TC 2.A.29) family. In terms of assembly, monomer. Found in a complex with ARL2, ARL2BP and SLC25A6/ANT3. In terms of processing, trimethylated by ANTKMT at Lys-52.

Its subcellular location is the mitochondrion inner membrane. The protein localises to the membrane. It catalyses the reaction ADP(in) + ATP(out) = ADP(out) + ATP(in). The catalysed reaction is H(+)(in) = H(+)(out). Its activity is regulated as follows. The matrix-open state (m-state) is inhibited by the membrane-permeable bongkrekic acid (BKA). The cytoplasmic-open state (c-state) is inhibited by the membrane-impermeable toxic inhibitor carboxyatractyloside (CATR). Proton transporter activity is inhibited by ADP:ATP antiporter activity. In terms of biological role, ADP:ATP antiporter that mediates import of ADP into the mitochondrial matrix for ATP synthesis, and export of ATP out to fuel the cell. Cycles between the cytoplasmic-open state (c-state) and the matrix-open state (m-state): operates by the alternating access mechanism with a single substrate-binding site intermittently exposed to either the cytosolic (c-state) or matrix (m-state) side of the inner mitochondrial membrane. In addition to its ADP:ATP antiporter activity, also involved in mitochondrial uncoupling and mitochondrial permeability transition pore (mPTP) activity. Plays a role in mitochondrial uncoupling by acting as a proton transporter: proton transport uncouples the proton flows via the electron transport chain and ATP synthase to reduce the efficiency of ATP production and cause mitochondrial thermogenesis. Proton transporter activity is inhibited by ADP:ATP antiporter activity, suggesting that SLC25A6/ANT3 acts as a master regulator of mitochondrial energy output by maintaining a delicate balance between ATP production (ADP:ATP antiporter activity) and thermogenesis (proton transporter activity). Proton transporter activity requires free fatty acids as cofactor, but does not transport it. Also plays a key role in mPTP opening, a non-specific pore that enables free passage of the mitochondrial membranes to solutes of up to 1.5 kDa, and which contributes to cell death. It is however unclear if SLC25A6/ANT3 constitutes a pore-forming component of mPTP or regulates it. This is ADP/ATP translocase 3 from Bos taurus (Bovine).